Consider the following 786-residue polypeptide: Endonuclease MutS2 (786 aa).

An ATP-binding site is contributed by 332 to 339 (GPNTGGKT). A Smr domain is found at 711–786 (IDLRGMDSEE…GTGVTVVILK (76 aa)).

It belongs to the DNA mismatch repair MutS family. MutS2 subfamily. Homodimer. Binds to stalled ribosomes, contacting rRNA.

Its function is as follows. Endonuclease that is involved in the suppression of homologous recombination and thus may have a key role in the control of bacterial genetic diversity. Functionally, acts as a ribosome collision sensor, splitting the ribosome into its 2 subunits. Detects stalled/collided 70S ribosomes which it binds and splits by an ATP-hydrolysis driven conformational change. Acts upstream of the ribosome quality control system (RQC), a ribosome-associated complex that mediates the extraction of incompletely synthesized nascent chains from stalled ribosomes and their subsequent degradation. Probably generates substrates for RQC. This Clostridium perfringens (strain ATCC 13124 / DSM 756 / JCM 1290 / NCIMB 6125 / NCTC 8237 / Type A) protein is Endonuclease MutS2.